The primary structure comprises 95 residues: MNNLTLEKKAQTRNLRKTLQGIVIRTSPKTIMVEVETAYKHKLYAKRFKKRKKFNTHDEKNLAEVGDFVKIAECRPISKTKHFRLVEVLQKKGEI.

The protein belongs to the universal ribosomal protein uS17 family. In terms of assembly, part of the 30S ribosomal subunit.

Its function is as follows. One of the primary rRNA binding proteins, it binds specifically to the 5'-end of 16S ribosomal RNA. The chain is Small ribosomal subunit protein uS17 from Mesomycoplasma hyopneumoniae (strain 7448) (Mycoplasma hyopneumoniae).